Consider the following 666-residue polypeptide: Mitogen-activated protein kinase kinase kinase ANP1 (666 aa).

The Protein kinase domain occupies 69–331 (WRKGQLIGRG…ASELLKHPFV (263 aa)). Residues 75 to 83 (IGRGAFGTV) and Lys98 contribute to the ATP site. Residues 101–131 (LIAANFASKEKTQAHIQELEEEVKLLKNLSH) are a coiled coil. Glycyl lysine isopeptide (Lys-Gly) (interchain with G-Cter in ubiquitin) cross-links involve residues Lys109 and Lys111. The active-site Proton acceptor is Asp197. Basic and acidic residues predominate over residues 452–464 (KFDESPGNGEKES). 3 disordered regions span residues 452–481 (KFDESPGNGEKESTMSMECDQPSYSEDDDE), 536–592 (GFLK…DGVS), and 635–666 (QEIMRQAGLGSSPRDRGMSRQREKSRFASPGK). Residues 538 to 558 (LKLPPKSRSPSRGPLGGSPSR) show a composition bias toward low complexity. A compositionally biased stretch (polar residues) spans 560 to 569 (TDATSCSKSP). Residues 620-643 (KKWKEELDQELERKRQEIMRQAGL) adopt a coiled-coil conformation. The segment covering 647-660 (PRDRGMSRQREKSR) has biased composition (basic and acidic residues).

Belongs to the protein kinase superfamily. STE Ser/Thr protein kinase family. MAP kinase kinase kinase subfamily. In terms of tissue distribution, expressed in roots, inflorescence stems, flower buds and flowers. Low amount in rosette and cauline leaves.

The catalysed reaction is L-seryl-[protein] + ATP = O-phospho-L-seryl-[protein] + ADP + H(+). It catalyses the reaction L-threonyl-[protein] + ATP = O-phospho-L-threonyl-[protein] + ADP + H(+). Its function is as follows. May be involved in an oxidative stress-mediated signaling cascade that phosphorylates downstream MAP kinases MPK3 and MPK6. May suppress auxin signaling that promotes cell cycle. Functionally redundant to ANP2 and ANP3 in the positive regulation of cytokinesis. The chain is Mitogen-activated protein kinase kinase kinase ANP1 (ANP1) from Arabidopsis thaliana (Mouse-ear cress).